We begin with the raw amino-acid sequence, 434 residues long: RHOMBOID-like protein 9, chloroplastic (434 aa).

A chloroplast-targeting transit peptide spans 1–68; sequence MALFPLHHEV…SPRRRLCLVR (68 aa). Transmembrane regions (helical) follow at residues 182 to 202, 209 to 229, 238 to 258, 267 to 287, 289 to 309, 326 to 346, 352 to 372, and 399 to 419; these read FYAV…EAAA, MGLL…ILAG, MFLH…LTFG, LFTF…MSFL, TADP…AWLV, LFQK…FGPI, LGAL…LQLG, and FLLF…IGDG.

This sequence belongs to the peptidase S54 family.

It is found in the plastid. The protein resides in the chloroplast membrane. Its function is as follows. Probable rhomboid-type serine protease that catalyzes intramembrane proteolysis. In Arabidopsis thaliana (Mouse-ear cress), this protein is RHOMBOID-like protein 9, chloroplastic.